A 190-amino-acid chain; its full sequence is Bifunctional D-Ala-D-Ala dipeptidase and D-Ala-D-Ala carboxypeptidase VanXYC (190 aa).

Glutamate 66 lines the Mg(2+) pocket. Positions 67, 88, 93, 95, and 102 each coordinate a dipeptide. Cu(2+) contacts are provided by histidine 95 and aspartate 102. Zn(2+)-binding residues include histidine 95 and aspartate 102. Glutamate 153 functions as the catalytic acid/base residue in the catalytic mechanism. Residues tryptophan 155 and histidine 156 each contribute to the a dipeptide site. Histidine 156 lines the Cu(2+) pocket. Histidine 156 lines the Zn(2+) pocket.

The protein belongs to the peptidase M15D family. In terms of assembly, homodimer.

It is found in the cytoplasm. The enzyme catalyses D-alanyl-D-alanine + H2O = 2 D-alanine. The catalysed reaction is UDP-N-acetyl-alpha-D-muramoyl-L-alanyl-gamma-D-glutamyl-L-lysyl-D-alanyl-D-alanine + H2O = UDP-N-acetyl-alpha-D-muramoyl-L-alanyl-gamma-D-glutamyl-L-lysyl-D-alanine + D-alanine. Functionally, bifunctional enzyme, exhibiting dipeptidase and carboxypeptidase activities. Catalyzes hydrolysis of the D-alanyl-D-alanine dipeptide. Cleaves the C-terminal D-alanine residue of UDP-muramyl-pentapeptide[Ala] (UDP-MurNAc-L-Ala-D-Glu-L-Lys-D-Ala-D-Ala). Shows no activity against the pentapeptide with a C-terminal D-serine residue. Together with VanC/VanC1 and VanT, required for vancomycin resistance in E.gallinarum strain BM4174. In Enterococcus gallinarum, this protein is Bifunctional D-Ala-D-Ala dipeptidase and D-Ala-D-Ala carboxypeptidase VanXYC.